A 132-amino-acid polypeptide reads, in one-letter code: Small ribosomal subunit protein uS8 (132 aa).

Belongs to the universal ribosomal protein uS8 family. In terms of assembly, part of the 30S ribosomal subunit. Contacts proteins S5 and S12.

Functionally, one of the primary rRNA binding proteins, it binds directly to 16S rRNA central domain where it helps coordinate assembly of the platform of the 30S subunit. The polypeptide is Small ribosomal subunit protein uS8 (Xanthomonas campestris pv. campestris (strain 8004)).